A 249-amino-acid chain; its full sequence is 2,3-bisphosphoglycerate-dependent phosphoglycerate mutase (249 aa).

Substrate is bound by residues 11–18, 24–25, arginine 63, 90–93, lysine 101, 117–118, and 184–185; these read RHGESDWN, TG, ERHY, RR, and GN. The active-site Tele-phosphohistidine intermediate is histidine 12. The Proton donor/acceptor role is filled by glutamate 90.

This sequence belongs to the phosphoglycerate mutase family. BPG-dependent PGAM subfamily.

It carries out the reaction (2R)-2-phosphoglycerate = (2R)-3-phosphoglycerate. The protein operates within carbohydrate degradation; glycolysis; pyruvate from D-glyceraldehyde 3-phosphate: step 3/5. Its function is as follows. Catalyzes the interconversion of 2-phosphoglycerate and 3-phosphoglycerate. The chain is 2,3-bisphosphoglycerate-dependent phosphoglycerate mutase from Mycobacterium bovis (strain BCG / Pasteur 1173P2).